The chain runs to 126 residues: LWamide neuropeptides (126 aa).

Positions 1-2 are cleaved as a propeptide — 1; the sequence is KR. Residues 1 to 126 are disordered; sequence KRQQPGLWGR…KSAIPKAKPQ (126 aa). Trp8 is subject to Tryptophan amide. A propeptide spans 11 to 15 (2); the sequence is SADPQ. Tryptophan amide occurs at positions 20 and 29. A propeptide spans 32-36 (2); that stretch reads SADPQ. Residues Trp41 and Trp50 each carry the tryptophan amide modification. A propeptide spans 53–57 (2); sequence SADPQ. Trp62 and Trp71 each carry tryptophan amide. Positions 74-78 are cleaved as a propeptide — 2; sequence SADPQ. Residue Trp83 is modified to Tryptophan amide. The propeptide at 86 to 93 is 3; sequence SAGSGKRQ. Trp99 carries the post-translational modification Tryptophan amide. Residues 102–126 constitute a propeptide, 4; sequence SAEPPQYKELEDLKQKSAIPKAKPQ. Residues 107-116 are compositionally biased toward basic and acidic residues; it reads QYKELEDLKQ.

It belongs to the LWamide neuropeptide family.

It is found in the secreted. Its function is as follows. Metamorphosin A may be part of an internal signaling system involved in control of metamorphosis. The chain is LWamide neuropeptides from Anemonia sulcata (Mediterranean snakelocks sea anemone).